A 414-amino-acid polypeptide reads, in one-letter code: 3-oxoacyl-[acyl-carrier-protein] synthase 2 (414 aa).

A Ketosynthase family 3 (KS3) domain is found at 4 to 411 (NKRVVITGMG…GHNAVLVFKK (408 aa)). Active-site for beta-ketoacyl synthase activity residues include Cys-165, His-304, and His-341.

It belongs to the thiolase-like superfamily. Beta-ketoacyl-ACP synthases family.

The enzyme catalyses a fatty acyl-[ACP] + malonyl-[ACP] + H(+) = a 3-oxoacyl-[ACP] + holo-[ACP] + CO2. The catalysed reaction is (9Z)-hexadecenoyl-[ACP] + malonyl-[ACP] + H(+) = 3-oxo-(11Z)-octadecenoyl-[ACP] + holo-[ACP] + CO2. Its pathway is lipid metabolism; fatty acid biosynthesis. In terms of biological role, involved in the type II fatty acid elongation cycle. Catalyzes the elongation of a wide range of acyl-ACP by the addition of two carbons from malonyl-ACP to an acyl acceptor. Can efficiently catalyze the conversion of palmitoleoyl-ACP (cis-hexadec-9-enoyl-ACP) to cis-vaccenoyl-ACP (cis-octadec-11-enoyl-ACP), an essential step in the thermal regulation of fatty acid composition. The protein is 3-oxoacyl-[acyl-carrier-protein] synthase 2 (fabF) of Staphylococcus aureus (strain Mu50 / ATCC 700699).